Here is a 329-residue protein sequence, read N- to C-terminus: Ubiquitin carboxyl-terminal hydrolase isozyme L5 (329 aa).

The UCH catalytic domain occupies 7-225 (EWCLMESDPG…IRFNLMAIVS (219 aa)). K47 carries the N6-succinyllysine modification. Catalysis depends on C88, which acts as the Nucleophile. K158 is modified (N6-acetyllysine). Residue H164 is the Proton donor of the active site. An N6-succinyllysine modification is found at K289. Positions 291 to 319 (NYLPFIMELLKTLAEHQQLIPLVEKAKEK) constitute a ULD domain. Residues 313–329 (VEKAKEKQNAKKAQETK) are interaction with ADRM1.

This sequence belongs to the peptidase C12 family. Component of the 19S (PA700) regulatory complex of the 26S proteasome. Interacts with ADRM1 and NFRKB. Component of the INO80 complex; specifically part of a complex module associated with N-terminus of INO80.

It is found in the cytoplasm. It localises to the nucleus. It catalyses the reaction Thiol-dependent hydrolysis of ester, thioester, amide, peptide and isopeptide bonds formed by the C-terminal Gly of ubiquitin (a 76-residue protein attached to proteins as an intracellular targeting signal).. With respect to regulation, activated by ADRM1. Inhibited by interaction with NFRKB. In terms of biological role, protease that specifically cleaves 'Lys-48'-linked polyubiquitin chains. Deubiquitinating enzyme associated with the 19S regulatory subunit of the 26S proteasome. Putative regulatory component of the INO80 complex; however is inactive in the INO80 complex and is activated by a transient interaction of the INO80 complex with the proteasome via ADRM1. The chain is Ubiquitin carboxyl-terminal hydrolase isozyme L5 (UCHL5) from Sus scrofa (Pig).